Reading from the N-terminus, the 132-residue chain is D-ribose pyranase (132 aa).

H20 (proton donor) is an active-site residue. Residues D28, H99, and 121 to 123 contribute to the substrate site; that span reads YSN.

It belongs to the RbsD / FucU family. RbsD subfamily. Homodecamer.

The protein resides in the cytoplasm. The catalysed reaction is beta-D-ribopyranose = beta-D-ribofuranose. Its pathway is carbohydrate metabolism; D-ribose degradation; D-ribose 5-phosphate from beta-D-ribopyranose: step 1/2. Functionally, catalyzes the interconversion of beta-pyran and beta-furan forms of D-ribose. The chain is D-ribose pyranase from Lactococcus lactis subsp. cremoris (strain SK11).